The following is a 336-amino-acid chain: Holliday junction branch migration complex subunit RuvB (336 aa).

Residues 4-184 (ADRLIQPQVQ…FGIPLRLEFY (181 aa)) are large ATPase domain (RuvB-L). Residues arginine 24, glycine 65, lysine 68, threonine 69, threonine 70, 131 to 133 (EDY), arginine 174, tyrosine 184, and arginine 221 contribute to the ATP site. Threonine 69 is a Mg(2+) binding site. The tract at residues 185–255 (NVADLTTIVT…VAEYALDLLD (71 aa)) is small ATPAse domain (RuvB-S). The interval 258–336 (DQGFDYLDRK…HFSLVRPEKA (79 aa)) is head domain (RuvB-H). DNA is bound by residues arginine 294, arginine 313, and arginine 318.

The protein belongs to the RuvB family. As to quaternary structure, homohexamer. Forms an RuvA(8)-RuvB(12)-Holliday junction (HJ) complex. HJ DNA is sandwiched between 2 RuvA tetramers; dsDNA enters through RuvA and exits via RuvB. An RuvB hexamer assembles on each DNA strand where it exits the tetramer. Each RuvB hexamer is contacted by two RuvA subunits (via domain III) on 2 adjacent RuvB subunits; this complex drives branch migration. In the full resolvosome a probable DNA-RuvA(4)-RuvB(12)-RuvC(2) complex forms which resolves the HJ.

The protein localises to the cytoplasm. It catalyses the reaction ATP + H2O = ADP + phosphate + H(+). The RuvA-RuvB-RuvC complex processes Holliday junction (HJ) DNA during genetic recombination and DNA repair, while the RuvA-RuvB complex plays an important role in the rescue of blocked DNA replication forks via replication fork reversal (RFR). RuvA specifically binds to HJ cruciform DNA, conferring on it an open structure. The RuvB hexamer acts as an ATP-dependent pump, pulling dsDNA into and through the RuvAB complex. RuvB forms 2 homohexamers on either side of HJ DNA bound by 1 or 2 RuvA tetramers; 4 subunits per hexamer contact DNA at a time. Coordinated motions by a converter formed by DNA-disengaged RuvB subunits stimulates ATP hydrolysis and nucleotide exchange. Immobilization of the converter enables RuvB to convert the ATP-contained energy into a lever motion, pulling 2 nucleotides of DNA out of the RuvA tetramer per ATP hydrolyzed, thus driving DNA branch migration. The RuvB motors rotate together with the DNA substrate, which together with the progressing nucleotide cycle form the mechanistic basis for DNA recombination by continuous HJ branch migration. Branch migration allows RuvC to scan DNA until it finds its consensus sequence, where it cleaves and resolves cruciform DNA. This chain is Holliday junction branch migration complex subunit RuvB, found in Shewanella frigidimarina (strain NCIMB 400).